The following is a 363-amino-acid chain: GDSL esterase/lipase At1g29670 (363 aa).

The first 24 residues, 1 to 24 (MESYLTKWCVVLVLLCFGFSVVKA), serve as a signal peptide directing secretion. Ser-39 serves as the catalytic Nucleophile. Residues Asp-327 and His-330 contribute to the active site.

It belongs to the 'GDSL' lipolytic enzyme family.

It localises to the secreted. The chain is GDSL esterase/lipase At1g29670 from Arabidopsis thaliana (Mouse-ear cress).